A 116-amino-acid chain; its full sequence is Distal membrane-arm assembly complex protein 1 (116 aa).

A disordered region spans residues 1–39; it reads MGSRLSQPFESYITAPPGTAAAPAKPAPPATPGAPTSPA. Residues 14–24 are compositionally biased toward low complexity; that stretch reads TAPPGTAAAPA. 2 helical membrane passes run 52-69 and 82-104; these read VLSG…YWVA and WTIT…GIVV.

As to quaternary structure, interacts with incompletely assembled mitochondrial NADH:ubiquinone oxidoreductase complex (complex I).

The protein localises to the mitochondrion inner membrane. Functionally, required for the assembly of the mitochondrial NADH:ubiquinone oxidoreductase complex (complex I). Involved in the assembly of the distal region of complex I. This is Distal membrane-arm assembly complex protein 1 from Homo sapiens (Human).